We begin with the raw amino-acid sequence, 356 residues long: Holliday junction branch migration complex subunit RuvB (356 aa).

Positions 4 to 190 (TDKLAAERII…FGIVARLEFY (187 aa)) are large ATPase domain (RuvB-L). Residues L29, R30, G71, K74, T75, T76, 137 to 139 (EDY), R180, Y190, and R227 each bind ATP. T75 contributes to the Mg(2+) binding site. A small ATPAse domain (RuvB-S) region spans residues 191 to 261 (DAEQLSRIVR…VADAALAMLD (71 aa)). The interval 264–356 (PVGFDLMDRK…NLWDTPDAER (93 aa)) is head domain (RuvB-H). R300, R319, and R324 together coordinate DNA.

It belongs to the RuvB family. In terms of assembly, homohexamer. Forms an RuvA(8)-RuvB(12)-Holliday junction (HJ) complex. HJ DNA is sandwiched between 2 RuvA tetramers; dsDNA enters through RuvA and exits via RuvB. An RuvB hexamer assembles on each DNA strand where it exits the tetramer. Each RuvB hexamer is contacted by two RuvA subunits (via domain III) on 2 adjacent RuvB subunits; this complex drives branch migration. In the full resolvosome a probable DNA-RuvA(4)-RuvB(12)-RuvC(2) complex forms which resolves the HJ.

The protein localises to the cytoplasm. The enzyme catalyses ATP + H2O = ADP + phosphate + H(+). Functionally, the RuvA-RuvB-RuvC complex processes Holliday junction (HJ) DNA during genetic recombination and DNA repair, while the RuvA-RuvB complex plays an important role in the rescue of blocked DNA replication forks via replication fork reversal (RFR). RuvA specifically binds to HJ cruciform DNA, conferring on it an open structure. The RuvB hexamer acts as an ATP-dependent pump, pulling dsDNA into and through the RuvAB complex. RuvB forms 2 homohexamers on either side of HJ DNA bound by 1 or 2 RuvA tetramers; 4 subunits per hexamer contact DNA at a time. Coordinated motions by a converter formed by DNA-disengaged RuvB subunits stimulates ATP hydrolysis and nucleotide exchange. Immobilization of the converter enables RuvB to convert the ATP-contained energy into a lever motion, pulling 2 nucleotides of DNA out of the RuvA tetramer per ATP hydrolyzed, thus driving DNA branch migration. The RuvB motors rotate together with the DNA substrate, which together with the progressing nucleotide cycle form the mechanistic basis for DNA recombination by continuous HJ branch migration. Branch migration allows RuvC to scan DNA until it finds its consensus sequence, where it cleaves and resolves cruciform DNA. This chain is Holliday junction branch migration complex subunit RuvB, found in Burkholderia thailandensis (strain ATCC 700388 / DSM 13276 / CCUG 48851 / CIP 106301 / E264).